The primary structure comprises 206 residues: Inner membrane protein YnjF (206 aa).

Residues 1 to 37 (MLDRHLHPRIKPLLHQCVRVLDKPGITPDGLTLVGFA) are Periplasmic-facing. Residues 38-60 (IGVLALPFLALGWYLAALVVILL) traverse the membrane as a helical segment. Residues 61-79 (NRLLDGLDGALARRRELTD) are Cytoplasmic-facing. Residues 80–102 (AGGFLDISLDFLFYALVPFGFIL) form a helical membrane-spanning segment. Residues 103-111 (AAPEQNALA) are Periplasmic-facing. The helical transmembrane segment at 112-134 (GGWLLFAFIGTGSSFLAFAALAA) threads the bilayer. At 135-146 (KHQIDNPGYAHK) the chain is on the cytoplasmic side. The helical transmembrane segment at 147–169 (SFYYLGGLTEGTETILLFVLGCL) threads the bilayer. Residues 170-173 (FPAW) lie on the Periplasmic side of the membrane. Residues 174–196 (FAWFAWIFGALCWMTTFTRVWSG) form a helical membrane-spanning segment. Over 197 to 206 (YLTLKSLQRQ) the chain is Cytoplasmic.

It belongs to the CDP-alcohol phosphatidyltransferase class-I family.

The protein localises to the cell inner membrane. The protein is Inner membrane protein YnjF (ynjF) of Escherichia coli (strain K12).